Consider the following 512-residue polypeptide: 2,3-bisphosphoglycerate-independent phosphoglycerate mutase (512 aa).

Aspartate 12 and serine 62 together coordinate Mn(2+). Serine 62 (phosphoserine intermediate) is an active-site residue. Substrate-binding positions include histidine 123, 154–155 (RD), arginine 181, arginine 187, 253–256 (RPDR), and lysine 336. Residues aspartate 403, histidine 407, aspartate 444, histidine 445, and histidine 462 each contribute to the Mn(2+) site.

Belongs to the BPG-independent phosphoglycerate mutase family. In terms of assembly, monomer. Mn(2+) is required as a cofactor.

It catalyses the reaction (2R)-2-phosphoglycerate = (2R)-3-phosphoglycerate. It functions in the pathway carbohydrate degradation; glycolysis; pyruvate from D-glyceraldehyde 3-phosphate: step 3/5. Functionally, catalyzes the interconversion of 2-phosphoglycerate and 3-phosphoglycerate. This is 2,3-bisphosphoglycerate-independent phosphoglycerate mutase from Onion yellows phytoplasma (strain OY-M).